Here is a 442-residue protein sequence, read N- to C-terminus: UDP-N-acetylmuramate--L-alanine ligase (442 aa).

109–115 (GAHGKTS) is an ATP binding site.

Belongs to the MurCDEF family.

It localises to the cytoplasm. It catalyses the reaction UDP-N-acetyl-alpha-D-muramate + L-alanine + ATP = UDP-N-acetyl-alpha-D-muramoyl-L-alanine + ADP + phosphate + H(+). It participates in cell wall biogenesis; peptidoglycan biosynthesis. In terms of biological role, cell wall formation. The sequence is that of UDP-N-acetylmuramate--L-alanine ligase from Streptococcus pyogenes serotype M6 (strain ATCC BAA-946 / MGAS10394).